The following is an 80-amino-acid chain: Keratin-associated protein 6-1 (80 aa).

Belongs to the KRTAP type 6 family. In terms of assembly, interacts with hair keratins.

Functionally, in the hair cortex, hair keratin intermediate filaments are embedded in an interfilamentous matrix, consisting of hair keratin-associated proteins (KRTAP), which are essential for the formation of a rigid and resistant hair shaft through their extensive disulfide bond cross-linking with abundant cysteine residues of hair keratins. The matrix proteins include the high-sulfur and high-glycine-tyrosine keratins. This chain is Keratin-associated protein 6-1 (KRTAP6-1), found in Oryctolagus cuniculus (Rabbit).